A 262-amino-acid polypeptide reads, in one-letter code: 3-methyl-2-oxobutanoate hydroxymethyltransferase (262 aa).

Mg(2+)-binding residues include Asp-43 and Asp-82. 3-methyl-2-oxobutanoate contacts are provided by residues 43 to 44 (DS), Asp-82, and Lys-110. Glu-112 is a binding site for Mg(2+). The active-site Proton acceptor is the Glu-179.

This sequence belongs to the PanB family. As to quaternary structure, homodecamer; pentamer of dimers. Mg(2+) is required as a cofactor.

The protein resides in the cytoplasm. It catalyses the reaction 3-methyl-2-oxobutanoate + (6R)-5,10-methylene-5,6,7,8-tetrahydrofolate + H2O = 2-dehydropantoate + (6S)-5,6,7,8-tetrahydrofolate. Its pathway is cofactor biosynthesis; (R)-pantothenate biosynthesis; (R)-pantoate from 3-methyl-2-oxobutanoate: step 1/2. Functionally, catalyzes the reversible reaction in which hydroxymethyl group from 5,10-methylenetetrahydrofolate is transferred onto alpha-ketoisovalerate to form ketopantoate. The protein is 3-methyl-2-oxobutanoate hydroxymethyltransferase of Sodalis glossinidius (strain morsitans).